The following is a 154-amino-acid chain: Ribosomal RNA large subunit methyltransferase H (154 aa).

Residue G103 coordinates S-adenosyl-L-methionine.

The protein belongs to the RNA methyltransferase RlmH family. Homodimer.

Its subcellular location is the cytoplasm. The enzyme catalyses pseudouridine(1915) in 23S rRNA + S-adenosyl-L-methionine = N(3)-methylpseudouridine(1915) in 23S rRNA + S-adenosyl-L-homocysteine + H(+). Functionally, specifically methylates the pseudouridine at position 1915 (m3Psi1915) in 23S rRNA. The protein is Ribosomal RNA large subunit methyltransferase H of Gemmatimonas aurantiaca (strain DSM 14586 / JCM 11422 / NBRC 100505 / T-27).